The sequence spans 142 residues: Small ribosomal subunit protein uS12y (142 aa).

The residue at position 61 (P61) is a Hydroxyproline.

The protein belongs to the universal ribosomal protein uS12 family.

This Arabidopsis thaliana (Mouse-ear cress) protein is Small ribosomal subunit protein uS12y (RPS23B).